A 431-amino-acid chain; its full sequence is Methionine aminopeptidase 2-2 (431 aa).

The tract at residues 1–76 (MAAQASEKLQ…PPRVPLSTLF (76 aa)) is disordered. Positions 35–47 (EAEDDSDDDEVED) are enriched in acidic residues. Position 184 (H184) interacts with substrate. Residues D204, D215, and H284 each coordinate a divalent metal cation. H292 is a binding site for substrate. E317 and E412 together coordinate a divalent metal cation.

It belongs to the peptidase M24A family. Methionine aminopeptidase eukaryotic type 2 subfamily. Co(2+) is required as a cofactor. It depends on Zn(2+) as a cofactor. The cofactor is Mn(2+). Fe(2+) serves as cofactor.

It localises to the cytoplasm. It carries out the reaction Release of N-terminal amino acids, preferentially methionine, from peptides and arylamides.. In terms of biological role, cotranslationally removes the N-terminal methionine from nascent proteins. The N-terminal methionine is often cleaved when the second residue in the primary sequence is small and uncharged (Met-Ala-, Cys, Gly, Pro, Ser, Thr, or Val). The protein is Methionine aminopeptidase 2-2 of Aspergillus niger (strain ATCC MYA-4892 / CBS 513.88 / FGSC A1513).